The chain runs to 405 residues: CMP-sialic acid transporter 4 (405 aa).

The Cytoplasmic segment spans residues 1–43; the sequence is MQRNGVMECSVCHSKVVAPSPRSVSRAYDKHRSKISSKYRALN. Residues 44-64 traverse the membrane as a helical segment; sequence FLLVSGDCILVGLQPILVFMS. Topologically, residues 65 to 74 are lumenal; the sequence is KVDGKFQFSP. The chain crosses the membrane as a helical span at residues 75-95; sequence ISVNFLTEVTKVIFAIVMLII. The Cytoplasmic segment spans residues 96–121; the sequence is QSRKQKVGEKPLLSLSTFVQAARNNA. The helical transmembrane segment at 122–142 threads the bilayer; sequence LLAVPALLYAINNYLKFIMQL. Position 143 (Y143) is a topological domain, lumenal. The chain crosses the membrane as a helical span at residues 144-164; that stretch reads FSPATVKMLSNLKVLVIAILL. Topologically, residues 165–171 are cytoplasmic; that stretch reads KFIMRRK. The helical transmembrane segment at 172–192 threads the bilayer; it reads FSIIQWEALALLLIGISVNQL. Over 193–203 the chain is Lumenal; sequence SSIPDGTKSFG. The chain crosses the membrane as a helical span at residues 204-224; it reads LAVTTIAYIYTLIFVTVPSLA. Topologically, residues 225-244 are cytoplasmic; that stretch reads SVYNEYALKSQFDTSIYLQN. A helical transmembrane segment spans residues 245-265; sequence LFLYGYGAIFNFLGILGTVIF. Residues 266–281 lie on the Lumenal side of the membrane; sequence QGPESFDILRGHSRAT. A helical membrane pass occupies residues 282-302; sequence MFLICNNAAQGILSSFFFKYA. Residues 303 to 322 lie on the Cytoplasmic side of the membrane; that stretch reads DTILKKYSSTVATIFTGLAS. Residues 323-343 traverse the membrane as a helical segment; that stretch reads AAFLGHTLTVNFLLGISIVFI. Residues 344–405 lie on the Lumenal side of the membrane; the sequence is SMHQFFSPLA…TDERKPLLPI (62 aa).

It belongs to the nucleotide-sugar transporter family. CMP-Sialate:CMP antiporter (TC 2.A.7.12) subfamily.

Its subcellular location is the golgi apparatus membrane. In terms of biological role, sugar transporter involved in the transport of CMP-sialic acid from the cytoplasm into the Golgi. May transport important nucleotide sugars such as CMP-Kdo (2-keto-3-deoxy-D-manno-octulosonic acid) in physiological conditions. This is CMP-sialic acid transporter 4 from Oryza sativa subsp. japonica (Rice).